A 365-amino-acid polypeptide reads, in one-letter code: Chorismate synthase (365 aa).

NADP(+) contacts are provided by arginine 48 and arginine 54. FMN contacts are provided by residues 131–133 (RSS), 243–244 (NA), glycine 288, 303–307 (KPTSS), and arginine 329.

The protein belongs to the chorismate synthase family. Homotetramer. It depends on FMNH2 as a cofactor.

The enzyme catalyses 5-O-(1-carboxyvinyl)-3-phosphoshikimate = chorismate + phosphate. It functions in the pathway metabolic intermediate biosynthesis; chorismate biosynthesis; chorismate from D-erythrose 4-phosphate and phosphoenolpyruvate: step 7/7. Its function is as follows. Catalyzes the anti-1,4-elimination of the C-3 phosphate and the C-6 proR hydrogen from 5-enolpyruvylshikimate-3-phosphate (EPSP) to yield chorismate, which is the branch point compound that serves as the starting substrate for the three terminal pathways of aromatic amino acid biosynthesis. This reaction introduces a second double bond into the aromatic ring system. The protein is Chorismate synthase of Agrobacterium fabrum (strain C58 / ATCC 33970) (Agrobacterium tumefaciens (strain C58)).